The following is a 344-amino-acid chain: N-acetyl-gamma-glutamyl-phosphate reductase (344 aa).

Cys150 is a catalytic residue.

The protein belongs to the NAGSA dehydrogenase family. Type 1 subfamily.

The protein localises to the cytoplasm. The catalysed reaction is N-acetyl-L-glutamate 5-semialdehyde + phosphate + NADP(+) = N-acetyl-L-glutamyl 5-phosphate + NADPH + H(+). It functions in the pathway amino-acid biosynthesis; L-arginine biosynthesis; N(2)-acetyl-L-ornithine from L-glutamate: step 3/4. Functionally, catalyzes the NADPH-dependent reduction of N-acetyl-5-glutamyl phosphate to yield N-acetyl-L-glutamate 5-semialdehyde. The chain is N-acetyl-gamma-glutamyl-phosphate reductase from Pseudomonas aeruginosa (strain ATCC 15692 / DSM 22644 / CIP 104116 / JCM 14847 / LMG 12228 / 1C / PRS 101 / PAO1).